Reading from the N-terminus, the 241-residue chain is Dephospho-CoA kinase CAB5 (241 aa).

The region spanning 3–211 is the DPCK domain; sequence VVGLTGGIAC…PSKLRTVLEY (209 aa). 8–15 is a binding site for ATP; sequence GGIACGKS.

The protein belongs to the CoaE family.

It localises to the endoplasmic reticulum. It is found in the mitochondrion. Its subcellular location is the nucleus. It carries out the reaction 3'-dephospho-CoA + ATP = ADP + CoA + H(+). It participates in cofactor biosynthesis; coenzyme A biosynthesis; CoA from (R)-pantothenate: step 5/5. In terms of biological role, catalyzes the phosphorylation of the 3'-hydroxyl group of dephosphocoenzyme A to form coenzyme A. The protein is Dephospho-CoA kinase CAB5 (CAB5) of Saccharomyces cerevisiae (strain ATCC 204508 / S288c) (Baker's yeast).